Here is a 651-residue protein sequence, read N- to C-terminus: Peptidoglycan D,D-transpeptidase MrdA (651 aa).

Residues 30–50 (LVAFLGILLLTGVLFTNIYQL) form a helical membrane-spanning segment. Residue serine 338 is the Acyl-ester intermediate of the active site.

This sequence belongs to the transpeptidase family. MrdA subfamily.

Its subcellular location is the cell inner membrane. It catalyses the reaction Preferential cleavage: (Ac)2-L-Lys-D-Ala-|-D-Ala. Also transpeptidation of peptidyl-alanyl moieties that are N-acyl substituents of D-alanine.. It functions in the pathway cell wall biogenesis; peptidoglycan biosynthesis. In terms of biological role, catalyzes cross-linking of the peptidoglycan cell wall. This chain is Peptidoglycan D,D-transpeptidase MrdA, found in Haemophilus influenzae (strain ATCC 51907 / DSM 11121 / KW20 / Rd).